A 396-amino-acid polypeptide reads, in one-letter code: Phosphoglycerate kinase (396 aa).

Substrate is bound by residues 21–23 (DFN), arginine 36, 59–62 (HLGK), arginine 119, and arginine 156. ATP is bound by residues lysine 206, glutamate 325, and 352–355 (GGDS).

Belongs to the phosphoglycerate kinase family. In terms of assembly, monomer.

It is found in the cytoplasm. The enzyme catalyses (2R)-3-phosphoglycerate + ATP = (2R)-3-phospho-glyceroyl phosphate + ADP. It functions in the pathway carbohydrate degradation; glycolysis; pyruvate from D-glyceraldehyde 3-phosphate: step 2/5. The polypeptide is Phosphoglycerate kinase (Staphylococcus carnosus (strain TM300)).